The primary structure comprises 740 residues: NAD(P)H-quinone oxidoreductase subunit 5, chloroplastic (740 aa).

16 helical membrane-spanning segments follow: residues Trp9–Phe29, Trp40–Ile60, Ile89–Ile109, Phe125–Ile145, Ile147–Thr167, Gly185–Phe205, Asn219–Ala239, Thr258–Ala278, Val286–Ala306, Leu327–Ile347, Ala354–Ser374, Ile396–Ser416, Trp425–Tyr445, Leu543–Phe563, Val602–Ile622, and Ser717–Phe737.

The protein belongs to the complex I subunit 5 family. As to quaternary structure, NDH is composed of at least 16 different subunits, 5 of which are encoded in the nucleus.

The protein localises to the plastid. It localises to the chloroplast thylakoid membrane. The enzyme catalyses a plastoquinone + NADH + (n+1) H(+)(in) = a plastoquinol + NAD(+) + n H(+)(out). It catalyses the reaction a plastoquinone + NADPH + (n+1) H(+)(in) = a plastoquinol + NADP(+) + n H(+)(out). NDH shuttles electrons from NAD(P)H:plastoquinone, via FMN and iron-sulfur (Fe-S) centers, to quinones in the photosynthetic chain and possibly in a chloroplast respiratory chain. The immediate electron acceptor for the enzyme in this species is believed to be plastoquinone. Couples the redox reaction to proton translocation, and thus conserves the redox energy in a proton gradient. This chain is NAD(P)H-quinone oxidoreductase subunit 5, chloroplastic (ndhF), found in Nicotiana sylvestris (Wood tobacco).